Here is a 159-residue protein sequence, read N- to C-terminus: Small ribosomal subunit protein uS9 (159 aa).

Belongs to the universal ribosomal protein uS9 family.

In Rickettsia peacockii (strain Rustic), this protein is Small ribosomal subunit protein uS9.